Reading from the N-terminus, the 156-residue chain is ATP synthase subunit b (156 aa).

The chain crosses the membrane as a helical span at residues 7 to 29; that stretch reads LLGQAIAFFFFVTFCMKYVWPPL.

This sequence belongs to the ATPase B chain family. In terms of assembly, F-type ATPases have 2 components, F(1) - the catalytic core - and F(0) - the membrane proton channel. F(1) has five subunits: alpha(3), beta(3), gamma(1), delta(1), epsilon(1). F(0) has three main subunits: a(1), b(2) and c(10-14). The alpha and beta chains form an alternating ring which encloses part of the gamma chain. F(1) is attached to F(0) by a central stalk formed by the gamma and epsilon chains, while a peripheral stalk is formed by the delta and b chains.

The protein localises to the cell inner membrane. Its function is as follows. F(1)F(0) ATP synthase produces ATP from ADP in the presence of a proton or sodium gradient. F-type ATPases consist of two structural domains, F(1) containing the extramembraneous catalytic core and F(0) containing the membrane proton channel, linked together by a central stalk and a peripheral stalk. During catalysis, ATP synthesis in the catalytic domain of F(1) is coupled via a rotary mechanism of the central stalk subunits to proton translocation. In terms of biological role, component of the F(0) channel, it forms part of the peripheral stalk, linking F(1) to F(0). This chain is ATP synthase subunit b, found in Photobacterium profundum (strain SS9).